Reading from the N-terminus, the 359-residue chain is Glycerol-3-phosphate dehydrogenase [NAD(P)+] (359 aa).

Thr11, Trp12, Arg32, and Lys107 together coordinate NADPH. Lys107 and Gly138 together coordinate sn-glycerol 3-phosphate. Residue Ala142 coordinates NADPH. Residues Lys193, Asp246, Ser256, Arg257, and Asn258 each contribute to the sn-glycerol 3-phosphate site. The active-site Proton acceptor is the Lys193. An NADPH-binding site is contributed by Arg257. Residues Val281 and Glu283 each contribute to the NADPH site.

Belongs to the NAD-dependent glycerol-3-phosphate dehydrogenase family.

It is found in the cytoplasm. The catalysed reaction is sn-glycerol 3-phosphate + NAD(+) = dihydroxyacetone phosphate + NADH + H(+). It catalyses the reaction sn-glycerol 3-phosphate + NADP(+) = dihydroxyacetone phosphate + NADPH + H(+). It participates in membrane lipid metabolism; glycerophospholipid metabolism. Functionally, catalyzes the reduction of the glycolytic intermediate dihydroxyacetone phosphate (DHAP) to sn-glycerol 3-phosphate (G3P), the key precursor for phospholipid synthesis. This chain is Glycerol-3-phosphate dehydrogenase [NAD(P)+], found in Dehalococcoides mccartyi (strain CBDB1).